The chain runs to 398 residues: CCA-adding enzyme (398 aa).

ATP is bound by residues G32 and R35. CTP contacts are provided by G32 and R35. Mg(2+) contacts are provided by D45 and D47. Positions 116, 159, 162, 165, and 168 each coordinate ATP. CTP-binding residues include R116, D159, R162, R165, and R168.

The protein belongs to the tRNA nucleotidyltransferase/poly(A) polymerase family. Bacterial CCA-adding enzyme type 3 subfamily. As to quaternary structure, homodimer. Requires Mg(2+) as cofactor.

It catalyses the reaction a tRNA precursor + 2 CTP + ATP = a tRNA with a 3' CCA end + 3 diphosphate. The catalysed reaction is a tRNA with a 3' CCA end + 2 CTP + ATP = a tRNA with a 3' CCACCA end + 3 diphosphate. Catalyzes the addition and repair of the essential 3'-terminal CCA sequence in tRNAs without using a nucleic acid template. Adds these three nucleotides in the order of C, C, and A to the tRNA nucleotide-73, using CTP and ATP as substrates and producing inorganic pyrophosphate. tRNA 3'-terminal CCA addition is required both for tRNA processing and repair. Also involved in tRNA surveillance by mediating tandem CCA addition to generate a CCACCA at the 3' terminus of unstable tRNAs. While stable tRNAs receive only 3'-terminal CCA, unstable tRNAs are marked with CCACCA and rapidly degraded. The sequence is that of CCA-adding enzyme from Lactobacillus johnsonii (strain CNCM I-12250 / La1 / NCC 533).